We begin with the raw amino-acid sequence, 226 residues long: Clarin-3 (226 aa).

Residues 8–28 (LMFLSSFFTSLGSFIVICSIL) form a helical membrane-spanning segment. N-linked (GlcNAc...) asparagine glycosylation is present at Asn83. 3 helical membrane-spanning segments follow: residues 92–112 (VTIL…GFTF), 129–149 (VYTW…LFVA), and 181–201 (FWLI…IIFY).

The protein belongs to the clarin family.

The protein resides in the membrane. The polypeptide is Clarin-3 (CLRN3) (Homo sapiens (Human)).